A 206-amino-acid polypeptide reads, in one-letter code: 2,3-bisphosphoglycerate-dependent phosphoglycerate mutase (206 aa).

Substrate is bound by residues 9 to 16 (RHGQSEWN), 22 to 23 (TG), Arg61, 88 to 91 (ERDY), Lys99, 115 to 116 (RR), and 159 to 160 (GN). His10 serves as the catalytic Tele-phosphohistidine intermediate. Glu88 (proton donor/acceptor) is an active-site residue.

The protein belongs to the phosphoglycerate mutase family. BPG-dependent PGAM subfamily. In terms of assembly, homodimer.

It catalyses the reaction (2R)-2-phosphoglycerate = (2R)-3-phosphoglycerate. It participates in carbohydrate degradation; glycolysis; pyruvate from D-glyceraldehyde 3-phosphate: step 3/5. In terms of biological role, catalyzes the interconversion of 2-phosphoglycerate and 3-phosphoglycerate. The chain is 2,3-bisphosphoglycerate-dependent phosphoglycerate mutase from Brucella anthropi (strain ATCC 49188 / DSM 6882 / CCUG 24695 / JCM 21032 / LMG 3331 / NBRC 15819 / NCTC 12168 / Alc 37) (Ochrobactrum anthropi).